The chain runs to 315 residues: Carbamate kinase (315 aa).

This sequence belongs to the carbamate kinase family. In terms of assembly, homodimer.

The protein resides in the cytoplasm. The catalysed reaction is hydrogencarbonate + NH4(+) + ATP = carbamoyl phosphate + ADP + H2O + H(+). The polypeptide is Carbamate kinase (cpkA) (Thermococcus kodakarensis (strain ATCC BAA-918 / JCM 12380 / KOD1) (Pyrococcus kodakaraensis (strain KOD1))).